Consider the following 399-residue polypeptide: uncharacterized protein (399 aa).

Topologically, residues Met-1–Arg-8 are cytoplasmic. A helical membrane pass occupies residues His-9–Leu-35. The Extracellular portion of the chain corresponds to Thr-36 to Ser-42. A helical membrane pass occupies residues Gly-43–Thr-71. Over Gln-72–Lys-75 the chain is Cytoplasmic. A helical transmembrane segment spans residues Gly-76–Phe-101. Over Ile-102–Ala-105 the chain is Extracellular. Residues Ala-106 to Ser-123 traverse the membrane as a helical segment. Over Leu-124–Tyr-134 the chain is Cytoplasmic. Residues Gly-135–Asn-157 form a helical membrane-spanning segment. The Extracellular segment spans residues Gln-158–Tyr-160. Residues Pro-161–Ala-180 traverse the membrane as a helical segment. At Ser-181–Phe-210 the chain is on the cytoplasmic side. A helical membrane pass occupies residues Met-211–Leu-230. Residues Phe-231–Lys-234 lie on the Extracellular side of the membrane. Residues Ser-235 to Phe-259 traverse the membrane as a helical segment. At Ala-260–Leu-269 the chain is on the cytoplasmic side. A helical transmembrane segment spans residues Leu-270–Thr-289. The Extracellular portion of the chain corresponds to Ala-290 to Ser-292. A helical transmembrane segment spans residues Leu-293–Leu-315. The Cytoplasmic portion of the chain corresponds to Gln-316–Glu-327. Residues Ala-328–Asp-355 form a helical membrane-spanning segment. The Extracellular segment spans residues Tyr-356 to Ser-358. A helical membrane pass occupies residues Ile-359 to Tyr-379. Over Leu-380–Pro-399 the chain is Cytoplasmic.

Belongs to the major facilitator superfamily.

It localises to the cell membrane. This is an uncharacterized protein from Bacillus subtilis (strain 168).